The chain runs to 520 residues: Hydroxymethylglutaryl-CoA synthase, cytoplasmic (520 aa).

Ser-4 is subject to Phosphoserine. (3S)-3-hydroxy-3-methylglutaryl-CoA-binding residues include Asp-43 and Ala-44. Residue 44–46 (AGK) participates in CoA binding. The residue at position 46 (Lys-46) is an N6-acetyllysine. Glu-95 acts as the Proton donor/acceptor in catalysis. Cys-129, Asn-167, Thr-171, Ser-221, and His-264 together coordinate (3S)-3-hydroxy-3-methylglutaryl-CoA. Cys-129 (acyl-thioester intermediate) is an active-site residue. Position 167 (Asn-167) interacts with CoA. Ser-221 contacts CoA. His-264 (proton donor/acceptor) is an active-site residue. Lys-269 and Lys-273 together coordinate CoA. Residues Lys-273, Asn-343, and Ser-377 each coordinate (3S)-3-hydroxy-3-methylglutaryl-CoA. The residue at position 273 (Lys-273) is an N6-acetyllysine. Positions 488-520 (TATEHIPSPAKKVPRLPATSAESESAVISNGEH) are disordered. A phosphoserine mark is found at Ser-495 and Ser-516. Residues 507–520 (SAESESAVISNGEH) show a composition bias toward polar residues.

The protein belongs to the thiolase-like superfamily. HMG-CoA synthase family. Homodimer.

Its subcellular location is the cytoplasm. It catalyses the reaction acetoacetyl-CoA + acetyl-CoA + H2O = (3S)-3-hydroxy-3-methylglutaryl-CoA + CoA + H(+). Its pathway is metabolic intermediate biosynthesis; (R)-mevalonate biosynthesis; (R)-mevalonate from acetyl-CoA: step 2/3. Catalyzes the condensation of acetyl-CoA with acetoacetyl-CoA to form HMG-CoA, which is converted by HMG-CoA reductase (HMGCR) into mevalonate, a precursor for cholesterol synthesis. This is Hydroxymethylglutaryl-CoA synthase, cytoplasmic from Mus musculus (Mouse).